A 134-amino-acid polypeptide reads, in one-letter code: Profilin-2 (134 aa).

A disulfide bridge connects residues Cys-13 and Cys-118. An Involved in PIP2 interaction motif is present at residues 84-100; that stretch reads AVIRGKKGSGGITIKKT. Phosphothreonine is present on Thr-114.

It belongs to the profilin family. As to quaternary structure, occurs in many kinds of cells as a complex with monomeric actin in a 1:1 ratio. In terms of processing, phosphorylated by MAP kinases.

It localises to the cytoplasm. The protein resides in the cytoskeleton. In terms of biological role, binds to actin and affects the structure of the cytoskeleton. At high concentrations, profilin prevents the polymerization of actin, whereas it enhances it at low concentrations. This Olea europaea (Common olive) protein is Profilin-2.